A 552-amino-acid chain; its full sequence is MSKNYLLAVLALLLSGPVVAADAIAGTVERQPVNMEAIVMFLIFVAMTLGITYWASRRTRSRSDYYTAGGNITGFQNGLAMAGDFMSAASFLGISALVYTSGFDGLIYSLGFLVGWPIILFLIAERLRNLGRYTFADVASYRLKQMPIRTLSACGSLVVVALYLIAQMVGAGKLIQLLFGLDYHVAVVLVGILMVMYVLFGGMLATTWVQIIKAVLLLFGASFMAIMVMKNVGFSFDTLFSEAMKIHPKGVAIMRPGGLVNDPISALSLGLGLMFGTAGLPHILMRFFTVSDAREARKSVFYATGLMGYFYFLTFIIGFGAILLVGANPAFKDATGALLGGNNMAAVHLADAVGGSLFLGFISAVAFATILAVVAGLTLAGASAVSHDLYASVVRKGQASEREELRVSKITVVALGVVAILLGILFEKQNIAFMVGLAFSIAASCNFPIILLSMYWSRLTTRGAMTGGWLGLLTAVILMILGPTIWVQVLGHARPIFPYEYPALFSMLVAFIGTWLFSVTDNSTQGAEERLRFRAQFVRSQTGVGIEGGKGH.

14 helical membrane passes run Leu-6–Gly-26, Met-35–Ala-55, Gly-78–Val-98, Phe-103–Ile-123, Leu-151–Ala-171, Val-185–Ala-205, Trp-208–Val-228, Ile-264–Leu-284, Gly-305–Val-325, Leu-357–Leu-377, Val-407–Glu-427, Ile-431–Leu-451, Gly-467–Val-487, and Ile-496–Leu-516.

The protein belongs to the sodium:solute symporter (SSF) (TC 2.A.21) family.

The protein resides in the cell inner membrane. Transports acetate. This is Cation/acetate symporter ActP from Erwinia tasmaniensis (strain DSM 17950 / CFBP 7177 / CIP 109463 / NCPPB 4357 / Et1/99).